Consider the following 776-residue polypeptide: Serine/threonine-protein kinase SIK1 (776 aa).

One can recognise a Protein kinase domain in the interval 27-278; it reads YDVERTLGKG…IAQIRQHRWM (252 aa). ATP contacts are provided by residues 33–41 and lysine 56; that span reads LGKGNFAVV. Aspartate 149 serves as the catalytic Proton acceptor. Threonine 182 carries the phosphothreonine; by LKB1 and GSK3-beta modification. Serine 186 bears the Phosphoserine; by autocatalysis mark. In terms of domain architecture, UBA spans 303–343; sequence DYNEQVLGIMQALGIDRQRTVESLQNSSYNHFAAIYYLLLE. Residue threonine 322 is modified to Phosphothreonine; by CaMK1. Disordered stretches follow at residues 350–371 and 449–472; these read STQPSSRATPAPARQPQLRNSD and EARQGPSLEEEQEVQEPLPGSTGR. Serine 577 is modified (phosphoserine; by PKA). Residues 586–612 are RK-rich region; it reads KAFRQQLRKNARTKGFLGLNKIKGLAR. Residues 621-643 are disordered; the sequence is GSRGGMSTFHTPAPSSGLQGCTA. The span at 628–643 shows a compositional bias: polar residues; it reads TFHTPAPSSGLQGCTA.

Belongs to the protein kinase superfamily. CAMK Ser/Thr protein kinase family. AMPK subfamily. In terms of assembly, interacts (when phosphorylated on Thr-182 and Ser-186) with YWHAZ. Interacts with ATP1A1. Requires Mg(2+) as cofactor. In terms of processing, phosphorylated at Thr-182 by STK11/LKB1 in complex with STE20-related adapter-alpha (STRADA) pseudo kinase and CAB39, leading to its activation. Phosphorylation at Thr-182 promotes autophosphorylation at Ser-186, which is required for sustained activity. Autophosphorylation at Ser-186 is maintained by sequential phosphorylation at Thr-182 by GSK3-beta. GSK3-beta cannot initiate phosphorylation at Thr-182, it can only maintain it. Phosphorylation at Ser-577 by PKA promotes translocation to the cytoplasm. Phosphorylation at Thr-322 by CaMK1 following intracellular sodium concentration leads to activation.

Its subcellular location is the cytoplasm. It is found in the nucleus. It catalyses the reaction L-seryl-[protein] + ATP = O-phospho-L-seryl-[protein] + ADP + H(+). The catalysed reaction is L-threonyl-[protein] + ATP = O-phospho-L-threonyl-[protein] + ADP + H(+). Activated by phosphorylation on Thr-182. Also activated by phosphorylation on Thr-322 in response to increases in intracellular sodium in parallel with elevations in intracellular calcium through the reversible sodium/calcium exchanger. Functionally, serine/threonine-protein kinase involved in various processes such as cell cycle regulation, gluconeogenesis and lipogenesis regulation, muscle growth and differentiation and tumor suppression. Phosphorylates HDAC4, HDAC5, PPME1, SREBF1, CRTC1/TORC1 and CRTC2/TORC2. Acts as a tumor suppressor and plays a key role in p53/TP53-dependent anoikis, a type of apoptosis triggered by cell detachment: required for phosphorylation of p53/TP53 in response to loss of adhesion and is able to suppress metastasis. Part of a sodium-sensing signaling network, probably by mediating phosphorylation of PPME1: following increases in intracellular sodium, SIK1 is activated by CaMK1 and phosphorylates PPME1 subunit of protein phosphatase 2A (PP2A), leading to dephosphorylation of sodium/potassium-transporting ATPase ATP1A1 and subsequent increase activity of ATP1A1. Acts as a regulator of muscle cells by phosphorylating and inhibiting class II histone deacetylases HDAC4 and HDAC5, leading to promote expression of MEF2 target genes in myocytes. Also required during cardiomyogenesis by regulating the exit of cardiomyoblasts from the cell cycle via down-regulation of CDKN1C/p57Kip2. Acts as a regulator of hepatic gluconeogenesis by phosphorylating and repressing the CREB-specific coactivators CRTC1/TORC1 and CRTC2/TORC2, leading to inhibit CREB activity. Also regulates hepatic lipogenesis by phosphorylating and inhibiting SREBF1. In concert with CRTC1/TORC1, regulates the light-induced entrainment of the circadian clock by attenuating PER1 induction; represses CREB-mediated transcription of PER1 by phosphorylating and deactivating CRTC1/TORC1. This is Serine/threonine-protein kinase SIK1 (Sik1) from Rattus norvegicus (Rat).